A 215-amino-acid chain; its full sequence is Glycerol-3-phosphate acyltransferase (215 aa).

Helical transmembrane passes span 14–34 (SSSA…AVVV), 63–83 (TAAA…LWLA), 92–112 (WGAY…PLFL), 128–148 (MAIE…VAVF), and 154–174 (LAAL…SGAA).

It belongs to the PlsY family. In terms of assembly, probably interacts with PlsX.

It is found in the cell inner membrane. It catalyses the reaction an acyl phosphate + sn-glycerol 3-phosphate = a 1-acyl-sn-glycero-3-phosphate + phosphate. The protein operates within lipid metabolism; phospholipid metabolism. In terms of biological role, catalyzes the transfer of an acyl group from acyl-phosphate (acyl-PO(4)) to glycerol-3-phosphate (G3P) to form lysophosphatidic acid (LPA). This enzyme utilizes acyl-phosphate as fatty acyl donor, but not acyl-CoA or acyl-ACP. The chain is Glycerol-3-phosphate acyltransferase from Bordetella bronchiseptica (strain ATCC BAA-588 / NCTC 13252 / RB50) (Alcaligenes bronchisepticus).